The chain runs to 301 residues: Mitochondrial carnitine/acylcarnitine carrier protein (301 aa).

A2 carries the N-acetylalanine modification. At 2–12 the chain is on the cytoplasmic side; that stretch reads ADEPKPISPFK. 3 Solcar repeats span residues 8–99, 108–196, and 207–293; these read ISPF…GKKL, LSYP…LKNL, and LSVP…AMKF. The chain crosses the membrane as a helical span at residues 13-31; it reads NLLAGGFGGMCLVFVGHPL. The Mitochondrial matrix portion of the chain corresponds to 32–73; the sequence is DTVKVRLQTQPPSLSGQPPMYSGTLDCFRKTLMREGITGLYR. A helical membrane pass occupies residues 74–93; the sequence is GMAAPIIGVTPMFAVCFFGF. Residues 94–112 are Cytoplasmic-facing; that stretch reads GLGKKLQQKSPEDELSYPQ. Residues 113 to 131 traverse the membrane as a helical segment; it reads LFTAGMLSGVFTTGIMTPG. Residues 132 to 170 lie on the Mitochondrial matrix side of the membrane; it reads ERIKCLLQIQASSGENKYSGTLDCAKKLYQEFGIRGFYK. N6-acetyllysine occurs at positions 148 and 157. An N6-acetyllysine; alternate modification is found at K170. N6-succinyllysine; alternate is present on K170. The chain crosses the membrane as a helical span at residues 171-190; sequence GTVLTLMRDVPASGMYFMTY. Over 191-211 the chain is Cytoplasmic; it reads EWLKNLFTPEGKSVSDLSVPR. Residues 212-230 traverse the membrane as a helical segment; sequence ILVAGGFAGIFNWAVAIPP. Residues 231-267 are Mitochondrial matrix-facing; the sequence is DVLKSRFQTAPPGKYPNGFRDVLRELIREEGVTSLYK. Residues 268–287 form a helical membrane-spanning segment; that stretch reads GFNAVMIRAFPANAACFLGF. At 288–301 the chain is on the cytoplasmic side; the sequence is EIAMKFLNWIAPNL.

The protein belongs to the mitochondrial carrier (TC 2.A.29) family. In terms of tissue distribution, widely expressed, with highest levels in the liver, intermediate levels in heart, testis and kidney and low levels in brain, including cortex, cerebellum, hippocampus and hypothalamus.

The protein localises to the mitochondrion inner membrane. It carries out the reaction O-acetyl-(R)-carnitine(in) + (R)-carnitine(out) = O-acetyl-(R)-carnitine(out) + (R)-carnitine(in). The enzyme catalyses an O-acyl-(R)-carnitine(in) + (R)-carnitine(out) = an O-acyl-(R)-carnitine(out) + (R)-carnitine(in). The catalysed reaction is O-propanoyl-(R)-carnitine(in) + (R)-carnitine(out) = O-propanoyl-(R)-carnitine(out) + (R)-carnitine(in). It catalyses the reaction O-hexadecanoyl-(R)-carnitine(in) + (R)-carnitine(out) = O-hexadecanoyl-(R)-carnitine(out) + (R)-carnitine(in). It carries out the reaction O-octanoyl-(R)-carnitine(in) + (R)-carnitine(out) = O-octanoyl-(R)-carnitine(out) + (R)-carnitine(in). The enzyme catalyses (R)-carnitine(in) = (R)-carnitine(out). Mediates the electroneutral exchange of acylcarnitines (O-acyl-(R)-carnitine or L-acylcarnitine) of different acyl chain lengths (ranging from O-acetyl-(R)-carnitine to long-chain O-acyl-(R)-carnitines) with free carnitine ((R)-carnitine or L-carnitine) across the mitochondrial inner membrane, via a ping-pong mechanism. Key player in the mitochondrial oxidation pathway, it translocates the fatty acids in the form of acylcarnitines into the mitochondrial matrix, where the carnitine palmitoyltransferase 2 (CPT-2) activates them to undergo fatty acid beta-oxidation. Catalyzes the unidirectional transport (uniport) of carnitine at lower rates than the antiport (exchange). In Mus musculus (Mouse), this protein is Mitochondrial carnitine/acylcarnitine carrier protein.